Reading from the N-terminus, the 106-residue chain is Nucleoid-associated protein Abu_0429 (106 aa).

It belongs to the YbaB/EbfC family. Homodimer.

The protein resides in the cytoplasm. Its subcellular location is the nucleoid. Functionally, binds to DNA and alters its conformation. May be involved in regulation of gene expression, nucleoid organization and DNA protection. The polypeptide is Nucleoid-associated protein Abu_0429 (Aliarcobacter butzleri (strain RM4018) (Arcobacter butzleri)).